The following is a 423-amino-acid chain: Imidazolonepropionase (423 aa).

Fe(3+) contacts are provided by His78 and His80. 2 residues coordinate Zn(2+): His78 and His80. 4-imidazolone-5-propanoate is bound by residues Arg87, Tyr150, and His183. Tyr150 lines the N-formimidoyl-L-glutamate pocket. His247 provides a ligand contact to Fe(3+). His247 provides a ligand contact to Zn(2+). Glu250 is a binding site for 4-imidazolone-5-propanoate. Residue Asp322 participates in Fe(3+) binding. Residue Asp322 coordinates Zn(2+). Residues Asn324 and Gly326 each contribute to the N-formimidoyl-L-glutamate site. Ser327 is a 4-imidazolone-5-propanoate binding site.

Belongs to the metallo-dependent hydrolases superfamily. HutI family. It depends on Zn(2+) as a cofactor. The cofactor is Fe(3+).

Its subcellular location is the cytoplasm. It catalyses the reaction 4-imidazolone-5-propanoate + H2O = N-formimidoyl-L-glutamate. It functions in the pathway amino-acid degradation; L-histidine degradation into L-glutamate; N-formimidoyl-L-glutamate from L-histidine: step 3/3. Catalyzes the hydrolytic cleavage of the carbon-nitrogen bond in imidazolone-5-propanoate to yield N-formimidoyl-L-glutamate. It is the third step in the universal histidine degradation pathway. The sequence is that of Imidazolonepropionase from Bacillus mycoides (strain KBAB4) (Bacillus weihenstephanensis).